Here is a 225-residue protein sequence, read N- to C-terminus: Uridylate kinase (225 aa).

Position 9–10 (glycine 9–serine 10) interacts with ATP. Glycine 44 provides a ligand contact to UMP. ATP contacts are provided by glycine 45 and arginine 49. UMP is bound by residues aspartate 66 and threonine 114 to threonine 120. 4 residues coordinate ATP: threonine 140, asparagine 141, tyrosine 146, and aspartate 149.

The protein belongs to the UMP kinase family. In terms of assembly, homohexamer.

The protein resides in the cytoplasm. The enzyme catalyses UMP + ATP = UDP + ADP. Its pathway is pyrimidine metabolism; CTP biosynthesis via de novo pathway; UDP from UMP (UMPK route): step 1/1. With respect to regulation, inhibited by UTP. In terms of biological role, catalyzes the reversible phosphorylation of UMP to UDP. In Thermococcus kodakarensis (strain ATCC BAA-918 / JCM 12380 / KOD1) (Pyrococcus kodakaraensis (strain KOD1)), this protein is Uridylate kinase.